The following is a 606-amino-acid chain: Adenine deaminase (606 aa).

It belongs to the metallo-dependent hydrolases superfamily. Adenine deaminase family. It depends on Mn(2+) as a cofactor.

It catalyses the reaction adenine + H2O + H(+) = hypoxanthine + NH4(+). The chain is Adenine deaminase from Rubrobacter xylanophilus (strain DSM 9941 / JCM 11954 / NBRC 16129 / PRD-1).